A 93-amino-acid chain; its full sequence is Putative pterin-4-alpha-carbinolamine dehydratase (93 aa).

It belongs to the pterin-4-alpha-carbinolamine dehydratase family.

The catalysed reaction is (4aS,6R)-4a-hydroxy-L-erythro-5,6,7,8-tetrahydrobiopterin = (6R)-L-erythro-6,7-dihydrobiopterin + H2O. This Trichormus variabilis (strain ATCC 29413 / PCC 7937) (Anabaena variabilis) protein is Putative pterin-4-alpha-carbinolamine dehydratase.